A 546-amino-acid chain; its full sequence is Probable malate:quinone oxidoreductase (546 aa).

This sequence belongs to the MQO family. Requires FAD as cofactor.

The catalysed reaction is (S)-malate + a quinone = a quinol + oxaloacetate. Its pathway is carbohydrate metabolism; tricarboxylic acid cycle; oxaloacetate from (S)-malate (quinone route): step 1/1. This Acinetobacter baumannii (strain ACICU) protein is Probable malate:quinone oxidoreductase.